The sequence spans 290 residues: MNFRNAHILTAMVTPFDDEGNYSSKRTKNLINYLLDNGTEGLLVSGTTGEAPTLSEDEKLQLIKDSVKFIDGRVPLMVGTGSNNTQQTIDYTNKVADIDGVDAALVVVPYYNKPNQKGMIAHFRKVADYSNLPIIIYNIPGRTGVTMEVDTIIELAQHDNIIGIKDCTGVENIAKIVENVPEDFLVYSGEDAEALSARVLGGQGIISVASHIYGDNMKTMYSSLESGDVSMAGKIMRDLIPKAEALFSYPSPSPVKAALNKIGYNVGGCRLPIVSLDKNEENELFKKLKI.

Residue Thr-48 coordinates pyruvate. Tyr-137 (proton donor/acceptor) is an active-site residue. Lys-165 functions as the Schiff-base intermediate with substrate in the catalytic mechanism. A pyruvate-binding site is contributed by Ile-206.

This sequence belongs to the DapA family. Homotetramer; dimer of dimers.

It localises to the cytoplasm. It catalyses the reaction L-aspartate 4-semialdehyde + pyruvate = (2S,4S)-4-hydroxy-2,3,4,5-tetrahydrodipicolinate + H2O + H(+). It participates in amino-acid biosynthesis; L-lysine biosynthesis via DAP pathway; (S)-tetrahydrodipicolinate from L-aspartate: step 3/4. In terms of biological role, catalyzes the condensation of (S)-aspartate-beta-semialdehyde [(S)-ASA] and pyruvate to 4-hydroxy-tetrahydrodipicolinate (HTPA). In Ligilactobacillus salivarius (strain UCC118) (Lactobacillus salivarius), this protein is 4-hydroxy-tetrahydrodipicolinate synthase.